Reading from the N-terminus, the 536-residue chain is T-complex protein 1 subunit delta (536 aa).

The segment covering 1–15 (MPEGKATSSASNTGK) has biased composition (polar residues). The tract at residues 1-26 (MPEGKATSSASNTGKNKGGAYQDRDK) is disordered. Gly-50 is a binding site for ADP. Residue Gly-50 participates in ATP binding. Residue Asp-101 coordinates Mg(2+). ADP-binding residues include Gly-102, Thr-103, Thr-104, Ser-105, Ser-170, Lys-171, Gly-422, and Gln-507. The ATP site is built by Gly-102 and Thr-103. Lys-171 is a binding site for ATP.

Belongs to the TCP-1 chaperonin family. Component of the chaperonin-containing T-complex (TRiC), a hexadecamer composed of two identical back-to-back stacked rings enclosing a protein folding chamber. Each ring is made up of eight different subunits: TCP1/CCT1, CCT2, CCT3, CCT4, CCT5, CCT6A/CCT6, CCT7, CCT8.

The protein localises to the cytoplasm. The enzyme catalyses ATP + H2O = ADP + phosphate + H(+). In terms of biological role, component of the chaperonin-containing T-complex (TRiC), a molecular chaperone complex that assists the folding of actin, tubulin and other proteins upon ATP hydrolysis. The sequence is that of T-complex protein 1 subunit delta (cct4) from Takifugu rubripes (Japanese pufferfish).